We begin with the raw amino-acid sequence, 150 residues long: MPKYYCDYCKSYLTHDTMSVRKSHLQGRNHIKFYCDYYEAKAKETNIWNPSSIPYEITLEKLNRYSDAKKSNGSSEDNMDIDKKENSSDHNKGNVVNHSDAGNDNDDDDDEMIFLPPPPNLSGLPLPPPAVYNNQKEYQKAILRQTLTKS.

The Matrin-type zinc finger occupies 4 to 36; the sequence is YYCDYCKSYLTHDTMSVRKSHLQGRNHIKFYCD. A disordered region spans residues 66-132; that stretch reads SDAKKSNGSS…GLPLPPPAVY (67 aa). Residues 80–92 are compositionally biased toward basic and acidic residues; sequence DIDKKENSSDHNK. Residues 103–112 are compositionally biased toward acidic residues; the sequence is NDNDDDDDEM. Pro residues predominate over residues 115-130; sequence LPPPPNLSGLPLPPPA.

This sequence belongs to the U1 small nuclear ribonucleoprotein C family. U1 snRNP is composed of the 7 core Sm proteins B/B', D1, D2, D3, E, F and G that assemble in a heptameric protein ring on the Sm site of the small nuclear RNA to form the core snRNP, and at least 3 U1 snRNP-specific proteins U1-70K, U1-A and U1-C. U1-C interacts with U1 snRNA and the 5' splice-site region of the pre-mRNA.

The protein resides in the nucleus. Functionally, component of the spliceosomal U1 snRNP, which is essential for recognition of the pre-mRNA 5' splice-site and the subsequent assembly of the spliceosome. U1-C is directly involved in initial 5' splice-site recognition for both constitutive and regulated alternative splicing. The interaction with the 5' splice-site seems to precede base-pairing between the pre-mRNA and the U1 snRNA. Stimulates commitment or early (E) complex formation by stabilizing the base pairing of the 5' end of the U1 snRNA and the 5' splice-site region. The protein is U1 small nuclear ribonucleoprotein C of Candida albicans (strain SC5314 / ATCC MYA-2876) (Yeast).